Here is a 535-residue protein sequence, read N- to C-terminus: MQAFKKKLQQLVYSFSTEDRYADYDEEAANPDVAAGVERSITESNHGSQIQLADYVDGSNPSGNEGINEALLAWRHIDNWTSQHNPDLAATLSDPCTRHDINNAEKDLDIIFPASVRASLRLHDGQEDLVSMTGTGGLFFGLQLMGLDEIVQMTRTWRNVAENLERKNHELQIKMDKHQELNGTTVDLPNQQKGYGKLENQDYKAMDPNLQRNISQNYKKQFKLPDIPDQHSVPPLAIQQVYANSGWIPLVTDNAGNHIGIDLAPGPKGKYGQVILFGREFDTKFVVASNWGDFLLSFANDLELGNWLLIDEGNDQFAGEGELVFRDKKSNGPVRDYLEVLVMRSRMKWNSFTERKLPEEPKRTVSSSQGSQNTVEPAEQQETALTVDETLDEKNDTSLSVDNTGTKQEVKDPETTGTKTGSSAKAEDNLPKTSNPDEVMADGADTQETSKHEQNESTNAVENTETSQEGAVETSEKPEEKPKKQSKKASKKKGKKDEKKDTDSKTKEPEVEEETESHLANSVEKLKDDFENVAL.

The segment covering 354–363 has biased composition (basic and acidic residues); that stretch reads ERKLPEEPKR. The disordered stretch occupies residues 354-535; that stretch reads ERKLPEEPKR…LKDDFENVAL (182 aa). Polar residues-rich tracts occupy residues 364-384, 397-407, and 456-469; these read TVSSSQGSQNTVEPAEQQETA, TSLSVDNTGTK, and ESTNAVENTETSQE. The segment covering 474–483 has biased composition (basic and acidic residues); it reads TSEKPEEKPK. Basic residues predominate over residues 484–494; it reads KQSKKASKKKG. Composition is skewed to basic and acidic residues over residues 495-509 and 524-535; these read KKDEKKDTDSKTKEP and EKLKDDFENVAL.

Belongs to the KNR4/SMI1 family.

The protein is KNR4/SMI1 homolog of Kluyveromyces lactis (strain ATCC 8585 / CBS 2359 / DSM 70799 / NBRC 1267 / NRRL Y-1140 / WM37) (Yeast).